Consider the following 152-residue polypeptide: Large ribosomal subunit protein uL22 (152 aa).

The protein belongs to the universal ribosomal protein uL22 family. In terms of assembly, part of the 50S ribosomal subunit.

Its function is as follows. This protein binds specifically to 23S rRNA. It makes multiple contacts with different domains of the 23S rRNA in the assembled 50S subunit and ribosome. The globular domain of the protein is located near the polypeptide exit tunnel on the outside of the subunit, while an extended beta-hairpin is found that lines the wall of the exit tunnel in the center of the 70S ribosome. The sequence is that of Large ribosomal subunit protein uL22 from Nitrosopumilus maritimus (strain SCM1).